The following is a 213-amino-acid chain: Kynurenine formamidase (213 aa).

Residue Trp18 coordinates substrate. Residues His48, His52, and Asp54 each contribute to the Zn(2+) site. His58 serves as the catalytic Proton donor/acceptor. Zn(2+) is bound by residues His160 and Glu172.

Belongs to the Cyclase 1 superfamily. KynB family. As to quaternary structure, homodimer. The cofactor is Zn(2+).

It carries out the reaction N-formyl-L-kynurenine + H2O = L-kynurenine + formate + H(+). The protein operates within amino-acid degradation; L-tryptophan degradation via kynurenine pathway; L-kynurenine from L-tryptophan: step 2/2. In terms of biological role, catalyzes the hydrolysis of N-formyl-L-kynurenine to L-kynurenine, the second step in the kynurenine pathway of tryptophan degradation. In Burkholderia cenocepacia (strain ATCC BAA-245 / DSM 16553 / LMG 16656 / NCTC 13227 / J2315 / CF5610) (Burkholderia cepacia (strain J2315)), this protein is Kynurenine formamidase.